A 600-amino-acid polypeptide reads, in one-letter code: Oligopeptide-binding protein OppA (600 aa).

A signal peptide spans 1-22 (MNKLKVTLLASSVVLAATLLSA). Residue Cys23 is the site of N-palmitoyl cysteine attachment. A lipid anchor (S-diacylglycerol cysteine) is attached at Cys23.

This sequence belongs to the bacterial solute-binding protein 5 family. As to quaternary structure, the complex is composed of two ATP-binding proteins (OppD and OppF), two transmembrane proteins (OppB and OppC) and a solute-binding protein (OppA).

It localises to the cell membrane. In terms of biological role, part of the ABC transporter complex OppABCDF involved in the uptake of oligopeptides. This chain is Oligopeptide-binding protein OppA, found in Lactococcus lactis subsp. cremoris (strain SK11).